Consider the following 370-residue polypeptide: 3-dehydroquinate synthase (370 aa).

Residues 112 to 116 (GVVGD), 136 to 137 (TS), Lys149, Lys158, and 176 to 179 (TLRT) contribute to the NAD(+) site. 3 residues coordinate Zn(2+): Glu191, His254, and His276.

Belongs to the sugar phosphate cyclases superfamily. Dehydroquinate synthase family. Co(2+) serves as cofactor. The cofactor is Zn(2+). Requires NAD(+) as cofactor.

It is found in the cytoplasm. It carries out the reaction 7-phospho-2-dehydro-3-deoxy-D-arabino-heptonate = 3-dehydroquinate + phosphate. The protein operates within metabolic intermediate biosynthesis; chorismate biosynthesis; chorismate from D-erythrose 4-phosphate and phosphoenolpyruvate: step 2/7. In terms of biological role, catalyzes the conversion of 3-deoxy-D-arabino-heptulosonate 7-phosphate (DAHP) to dehydroquinate (DHQ). This chain is 3-dehydroquinate synthase, found in Xanthomonas oryzae pv. oryzae (strain MAFF 311018).